A 51-amino-acid chain; its full sequence is Large ribosomal subunit protein bL33 (51 aa).

Belongs to the bacterial ribosomal protein bL33 family.

In Alteromonas mediterranea (strain DSM 17117 / CIP 110805 / LMG 28347 / Deep ecotype), this protein is Large ribosomal subunit protein bL33.